A 105-amino-acid polypeptide reads, in one-letter code: uncharacterized protein (105 aa).

Disordered regions lie at residues 29 to 55 (HTRVGVTDPDPRVPPLLPGPAGVTDES) and 72 to 105 (EQRGDRRAVRCEPAGEPPLDDVRTPAAPAVRSGR). The segment covering 72–81 (EQRGDRRAVR) has biased composition (basic and acidic residues).

This is an uncharacterized protein from Streptomyces coelicolor (strain ATCC BAA-471 / A3(2) / M145).